A 109-amino-acid polypeptide reads, in one-letter code: MAQFEWVHAAWLALAIVLEIVANVFLKFSDGFRRKIFGLLSLAAVLAAFSALSQAVKGIDLSVVYALWGGFGIAATLAAGWILFGQRLNRKGWIGLVLLLAGMIMVKLA.

The Periplasmic portion of the chain corresponds to 1 to 5; it reads MAQFE. Residues 6–26 traverse the membrane as a helical segment; it reads WVHAAWLALAIVLEIVANVFL. Residues 27–35 are Cytoplasmic-facing; the sequence is KFSDGFRRK. A helical transmembrane segment spans residues 36-56; it reads IFGLLSLAAVLAAFSALSQAV. The Periplasmic segment spans residues 57 to 63; that stretch reads KGIDLSV. A helical transmembrane segment spans residues 64–84; sequence VYALWGGFGIAATLAAGWILF. At 85–87 the chain is on the cytoplasmic side; it reads GQR. Residues 88-108 traverse the membrane as a helical segment; sequence LNRKGWIGLVLLLAGMIMVKL. A topological domain (periplasmic) is located at residue alanine 109.

This sequence belongs to the drug/metabolite transporter (DMT) superfamily. Small multidrug resistance (SMR) (TC 2.A.7.1) family. MdtI subfamily. Forms a complex with MdtJ.

It localises to the cell inner membrane. In terms of biological role, catalyzes the excretion of spermidine. The sequence is that of Spermidine export protein MdtI (mdtI) from Shigella flexneri.